We begin with the raw amino-acid sequence, 816 residues long: Phosphatidylinositol 4-kinase beta (816 aa).

Disordered stretches follow at residues 1–30 (MGDM…GSLL), 101–120 (EDEM…RRRR), and 250–318 (RKRE…SFSS). An N-acetylglycine modification is found at glycine 2. An interaction with ACBD3 region spans residues 2-68 (GDMVVEPATL…VKLLHGGVAI (67 aa)). Over residues 10 to 30 (TLKPTSEPTPSPSGNNGGSLL) the composition is skewed to low complexity. The 191-residue stretch at 52-242 (CQEVLEKVKL…GTKLRKLILS (191 aa)) folds into the PIK helical domain. Phosphoserine is present on serine 258. Residue threonine 263 is modified to Phosphothreonine. Serine 266, serine 275, serine 277, serine 284, and serine 294 each carry phosphoserine. Polar residues-rich tracts occupy residues 278 to 297 (DATA…SNPK) and 306 to 318 (SSST…SFSS). Serine 428 bears the Phosphoserine mark. Threonine 438 is modified (phosphothreonine). A Phosphoserine modification is found at serine 511. Phosphothreonine is present on residues threonine 517 and threonine 519. The 267-residue stretch at 535-801 (EPWQEKVRRI…MVDGSMRSIT (267 aa)) folds into the PI3K/PI4K catalytic domain. Positions 541–547 (VRRIREG) are G-loop. A catalytic loop region spans residues 668–676 (QVKDRHNGN). The activation loop stretch occupies residues 687–711 (HIDFGFILSSSPRNLGFETSAFKLT).

The protein belongs to the PI3/PI4-kinase family. Type III PI4K subfamily. In terms of assembly, interacts with ARF1 and ARF3 in the Golgi complex, but not with ARF4, ARF5 or ARF6. Interacts with NCS1/FREQ in a calcium-independent manner. Interacts with CALN1/CABP8 and CALN2/CABP7; in a calcium-dependent manner; this interaction competes with NCS1/FREQ binding. Interacts with ACBD3. Interacts with ARMH3, YWHAB, YWHAE, YWHAG, YWHAH, YWHAQ, YWHAZ and SFN. Interacts with GGA2 (via VHS domain); the interaction is important for PI4KB location at the Golgi apparatus membrane. Interacts with ATG9A. Mg(2+) is required as a cofactor. Requires Mn(2+) as cofactor.

It localises to the endomembrane system. Its subcellular location is the mitochondrion outer membrane. The protein localises to the rough endoplasmic reticulum membrane. It is found in the golgi apparatus. The protein resides in the golgi apparatus membrane. It catalyses the reaction a 1,2-diacyl-sn-glycero-3-phospho-(1D-myo-inositol) + ATP = a 1,2-diacyl-sn-glycero-3-phospho-(1D-myo-inositol 4-phosphate) + ADP + H(+). With respect to regulation, inhibited by wortmannin. Increased kinase activity upon interaction with NCS1/FREQ. Functionally, phosphorylates phosphatidylinositol (PI) in the first committed step in the production of the second messenger inositol-1,4,5,-trisphosphate (PIP). May regulate Golgi disintegration/reorganization during mitosis, possibly via its phosphorylation. Involved in Golgi-to-plasma membrane trafficking. May play an important role in the inner ear development. The polypeptide is Phosphatidylinositol 4-kinase beta (Pi4kb) (Mus musculus (Mouse)).